The sequence spans 542 residues: Putative beta-glucosidase 23 (542 aa).

A signal peptide spans 1-29 (MAACTSSLVSLLLLLLLLLLLLVAGEATA). N-linked (GlcNAc...) asparagine glycosylation occurs at N34. A beta-D-glucoside is bound at residue Q88. Residue N135 is glycosylated (N-linked (GlcNAc...) asparagine). A beta-D-glucoside is bound at residue H216. Catalysis depends on E262, which acts as the Proton donor. A disulfide bridge links C281 with C289. Position 405 (Y405) interacts with a beta-D-glucoside. N-linked (GlcNAc...) asparagine glycosylation occurs at N445. The a beta-D-glucoside site is built by W476 and F492.

Belongs to the glycosyl hydrolase 1 family.

The catalysed reaction is Hydrolysis of terminal, non-reducing beta-D-glucosyl residues with release of beta-D-glucose.. The sequence is that of Putative beta-glucosidase 23 (BGLU23) from Oryza sativa subsp. japonica (Rice).